Reading from the N-terminus, the 118-residue chain is Thioredoxin H-type (118 aa).

A Thioredoxin domain is found at 2 to 114 (AAEEGQVIGC…LQQTIAKHMA (113 aa)). Active-site nucleophile residues include Cys-40 and Cys-43. Cys-40 and Cys-43 form a disulfide bridge.

It belongs to the thioredoxin family. Plant H-type subfamily.

It localises to the cytoplasm. Functionally, participates in various redox reactions through the reversible oxidation of the active center dithiol to a disulfide. The H form is known to activate a number of cytosolic enzymes. This is Thioredoxin H-type from Ricinus communis (Castor bean).